The following is a 739-amino-acid chain: Pre-mRNA-splicing factor ATP-dependent RNA helicase ddx-15 (739 aa).

A compositionally biased stretch (basic and acidic residues) spans 1–19 (MSSRHRLDLDGSGRGDRRR). The interval 1–49 (MSSRHRLDLDGSGRGDRRRSPNRRSRSRSRSPHRRSSPDRKRQIGAVGN) is disordered. Over residues 20-35 (SPNRRSRSRSRSPHRR) the composition is skewed to basic residues. The region spanning 86-257 (MELLRNNQCI…FEDCPLLSVP (172 aa)) is the Helicase ATP-binding domain. Residue 99-106 (GETGSGKT) participates in ATP binding. The short motif at 204–207 (DEAH) is the DEAH box element. The Helicase C-terminal domain maps to 282-462 (TVIQIHMVEE…SVVLQLKKLG (181 aa)).

The protein belongs to the DEAD box helicase family. DEAH subfamily. DDX15/PRP43 sub-subfamily.

Its subcellular location is the nucleus. The enzyme catalyses ATP + H2O = ADP + phosphate + H(+). In terms of biological role, pre-mRNA processing factor involved in disassembly of spliceosomes after the release of mature mRNA. This chain is Pre-mRNA-splicing factor ATP-dependent RNA helicase ddx-15, found in Caenorhabditis elegans.